The following is a 510-amino-acid chain: NAD(P)H-quinone oxidoreductase subunit 2, chloroplastic (510 aa).

Helical transmembrane passes span 24 to 44 (LLLFHGSFIFPECILIFGLIL), 59 to 79 (WFYFISSTSLIISITALLFRW), 99 to 119 (IFQFLILLCSTLCIPLSVEYI), 124 to 144 (MAITEFLLFVLTATLGGMFLC), 149 to 169 (LITIFVAPECFSLCSYLLSGY), 183 to 203 (YLLMGGASSSILVHGFSWLYG), 229 to 249 (ISIALISITVGIGFKLSPAPF), 295 to 315 (WHLLLEILAILSMILGNLIAI), 323 to 343 (MLAYSSIGQIGYVIIGIIVGD), 354 to 374 (YMLFYISMNLGTFACIVLFGL), 395 to 415 (ALSSALCLLSLGGLPPLAGFF), and 418 to 438 (LHLFWCGWQAGLYFLVSIGLL).

It belongs to the complex I subunit 2 family. In terms of assembly, NDH is composed of at least 16 different subunits, 5 of which are encoded in the nucleus.

Its subcellular location is the plastid. The protein resides in the chloroplast thylakoid membrane. It carries out the reaction a plastoquinone + NADH + (n+1) H(+)(in) = a plastoquinol + NAD(+) + n H(+)(out). The catalysed reaction is a plastoquinone + NADPH + (n+1) H(+)(in) = a plastoquinol + NADP(+) + n H(+)(out). In terms of biological role, NDH shuttles electrons from NAD(P)H:plastoquinone, via FMN and iron-sulfur (Fe-S) centers, to quinones in the photosynthetic chain and possibly in a chloroplast respiratory chain. The immediate electron acceptor for the enzyme in this species is believed to be plastoquinone. Couples the redox reaction to proton translocation, and thus conserves the redox energy in a proton gradient. In Ensete ventricosum (Abyssinian banana), this protein is NAD(P)H-quinone oxidoreductase subunit 2, chloroplastic.